Reading from the N-terminus, the 82-residue chain is Omega-conotoxin-like 9 (82 aa).

Positions 1 to 22 (MKLTCMMIAAVLFLTTWTFVTA) are cleaved as a signal peptide. Positions 23 to 51 (DDSRYGLKNLFPKARHEMKNPEASKLNKR) are excised as a propeptide. 3 cysteine pairs are disulfide-bonded: Cys-54-Cys-69, Cys-61-Cys-73, and Cys-68-Cys-77.

The protein belongs to the conotoxin O1 superfamily. As to expression, expressed by the venom duct.

Its subcellular location is the secreted. In terms of biological role, omega-conotoxins act at presynaptic membranes, they bind and block voltage-gated calcium channels (Cav). In Conus striatus (Striated cone), this protein is Omega-conotoxin-like 9.